Reading from the N-terminus, the 138-residue chain is Phospholipase A2 homolog (138 aa).

An N-terminal signal peptide occupies residues 1–16 (MRALWIVAVWLIGVEG). 7 disulfides stabilise this stretch: Cys-42–Cys-131, Cys-44–Cys-60, Cys-59–Cys-111, Cys-65–Cys-138, Cys-66–Cys-104, Cys-73–Cys-97, and Cys-91–Cys-102. Residues 121 to 133 (KKYTYYPNFLCKG) are important for membrane-damaging activities in eukaryotes and bacteria; heparin-binding.

The protein belongs to the phospholipase A2 family. Group II subfamily. S49 sub-subfamily. As to quaternary structure, monomer. In terms of tissue distribution, expressed by the venom gland.

Its subcellular location is the secreted. Snake venom phospholipase A2 homolog that lacks enzymatic activity. Shows high myotoxin activities and displays edema-inducing activities. Has cytotoxic activities against HUVEC cells (LC(50)=5.0 uL) and human lung adenocarcinoma A549 cells (LC(50)=5.2 uL). This is Phospholipase A2 homolog from Echis ocellatus (Ocellated saw-scaled viper).